A 245-amino-acid chain; its full sequence is 5'-nucleotidase SurE (245 aa).

The a divalent metal cation site is built by Asp8, Asp9, Ser39, and Asn91.

This sequence belongs to the SurE nucleotidase family. It depends on a divalent metal cation as a cofactor.

The protein resides in the cytoplasm. The catalysed reaction is a ribonucleoside 5'-phosphate + H2O = a ribonucleoside + phosphate. Its function is as follows. Nucleotidase that shows phosphatase activity on nucleoside 5'-monophosphates. The polypeptide is 5'-nucleotidase SurE (Herminiimonas arsenicoxydans).